A 229-amino-acid polypeptide reads, in one-letter code: Protein-L-isoaspartate O-methyltransferase (229 aa).

The active site involves serine 65.

This sequence belongs to the methyltransferase superfamily. L-isoaspartyl/D-aspartyl protein methyltransferase family.

The protein localises to the cytoplasm. The enzyme catalyses [protein]-L-isoaspartate + S-adenosyl-L-methionine = [protein]-L-isoaspartate alpha-methyl ester + S-adenosyl-L-homocysteine. In terms of biological role, catalyzes the methyl esterification of L-isoaspartyl residues in peptides and proteins that result from spontaneous decomposition of normal L-aspartyl and L-asparaginyl residues. It plays a role in the repair and/or degradation of damaged proteins. This chain is Protein-L-isoaspartate O-methyltransferase, found in Chlorobium phaeovibrioides (strain DSM 265 / 1930) (Prosthecochloris vibrioformis (strain DSM 265)).